A 344-amino-acid chain; its full sequence is MAETKKLLRVLAGEVLDTPPIWMMRQAGRYLPEYRATRAQAGDFLSLCYNPELAAEVTLQPIRRYGFDAAILFADILLVPQALGADLWFETGEGPRLSTIGAQADFDRLKPVDAIHETLSPIYETVRILTRELPSETALIGFAGAPWTVATYMIAGRGTPDQGPAHALREGNPALFDALIARLTAATIEYLSAQIEAGAEVVKIFDSWAGSLKGEAFTKYALEPCREITQALKARHPGIPVIGFPREAGQGYVGFAKATGVDCVALDNSVTPDWAAAHVQVDGCVQGNLASSHMVTGGQALVDETRRIVEAFSKGPHIFNLGHGITPDADPENVQLMIDTVRKG.

Residues Arg25–Arg29, Asp75, Tyr152, Ser207, and His323 contribute to the substrate site.

The protein belongs to the uroporphyrinogen decarboxylase family. In terms of assembly, homodimer.

The protein resides in the cytoplasm. The catalysed reaction is uroporphyrinogen III + 4 H(+) = coproporphyrinogen III + 4 CO2. It functions in the pathway porphyrin-containing compound metabolism; protoporphyrin-IX biosynthesis; coproporphyrinogen-III from 5-aminolevulinate: step 4/4. Catalyzes the decarboxylation of four acetate groups of uroporphyrinogen-III to yield coproporphyrinogen-III. The polypeptide is Uroporphyrinogen decarboxylase (Ruegeria pomeroyi (strain ATCC 700808 / DSM 15171 / DSS-3) (Silicibacter pomeroyi)).